A 294-amino-acid polypeptide reads, in one-letter code: UDP-3-O-acyl-N-acetylglucosamine deacetylase (294 aa).

The Zn(2+) site is built by H75, H232, and D236. H259 functions as the Proton donor in the catalytic mechanism.

This sequence belongs to the LpxC family. Zn(2+) is required as a cofactor.

It carries out the reaction a UDP-3-O-[(3R)-3-hydroxyacyl]-N-acetyl-alpha-D-glucosamine + H2O = a UDP-3-O-[(3R)-3-hydroxyacyl]-alpha-D-glucosamine + acetate. The protein operates within glycolipid biosynthesis; lipid IV(A) biosynthesis; lipid IV(A) from (3R)-3-hydroxytetradecanoyl-[acyl-carrier-protein] and UDP-N-acetyl-alpha-D-glucosamine: step 2/6. Its function is as follows. Catalyzes the hydrolysis of UDP-3-O-myristoyl-N-acetylglucosamine to form UDP-3-O-myristoylglucosamine and acetate, the committed step in lipid A biosynthesis. This Campylobacter jejuni subsp. doylei (strain ATCC BAA-1458 / RM4099 / 269.97) protein is UDP-3-O-acyl-N-acetylglucosamine deacetylase.